We begin with the raw amino-acid sequence, 979 residues long: Probable serine/threonine-protein kinase iksA (979 aa).

N32, N110, N120, N121, N147, N155, N161, N220, N231, and N243 each carry an N-linked (GlcNAc...) asparagine glycan. The tract at residues 207–245 (SKSGVNNNNNNNNNDSTTTNNNNNNNTTPPQQQQQQNSS) is disordered. The span at 212–244 (NNNNNNNNNDSTTTNNNNNNNTTPPQQQQQQNS) shows a compositional bias: low complexity. The 308-residue stretch at 261-568 (FKEDIKIGSG…ISQILSTHFI (308 aa)) folds into the Protein kinase domain. ATP is bound by residues 267–275 (IGSGGFGSV) and K293. D397 (proton acceptor) is an active-site residue. N-linked (GlcNAc...) asparagine glycans are attached at residues N592, N597, N615, N645, N646, N663, and N699. A compositionally biased stretch (polar residues) spans 593–602 (TSVHNTTAST). The tract at residues 593–666 (TSVHNTTAST…LGNNNNNNTN (74 aa)) is disordered. Residues 610–666 (SISTTNSTTSSSSSTATSSSLSSTTIATTSSSNAINNTTATTTTNSNLGNNNNNNTN) show a composition bias toward low complexity. Positions 713-727 (NDDIIIDDDDDDDDS) are enriched in acidic residues. The disordered stretch occupies residues 713–793 (NDDIIIDDDD…GNNGIRKALP (81 aa)). Composition is skewed to low complexity over residues 728 to 737 (TNNNDTNNTD) and 753 to 773 (NNKK…SSNK). N-linked (GlcNAc...) asparagine glycans are attached at residues N731 and N734. A helical membrane pass occupies residues 846 to 866 (FPSPILLYPLLLLSLIPILVV). N-linked (GlcNAc...) asparagine glycosylation is found at N870 and N894. Transmembrane regions (helical) follow at residues 912–932 (INTI…VLLP) and 956–976 (FPLL…IFIF).

It belongs to the protein kinase superfamily. Ser/Thr protein kinase family.

It is found in the membrane. The enzyme catalyses L-seryl-[protein] + ATP = O-phospho-L-seryl-[protein] + ADP + H(+). It carries out the reaction L-threonyl-[protein] + ATP = O-phospho-L-threonyl-[protein] + ADP + H(+). This chain is Probable serine/threonine-protein kinase iksA (iksA), found in Dictyostelium discoideum (Social amoeba).